The primary structure comprises 275 residues: Intercellular adhesion molecule 2 (275 aa).

The signal sequence occupies residues 1–24 (MSSFGYRTLTVALFALICCPGSDE). The Extracellular portion of the chain corresponds to 25–223 (KVFEVHVRPK…EIYEPVSDSQ (199 aa)). The Ig-like C2-type 1 domain occupies 41–98 (KASLEVNCSTTCNQPEVGGLETSLDKILLDEQAQWKHYLVSNISHDTVLQCHFTCSGK). 7 N-linked (GlcNAc...) asparagine glycosylation sites follow: N47, N82, N105, N153, N158, N176, and N187. Intrachain disulfides connect C48–C91 and C52–C95. An Ig-like C2-type 2 domain is found at 127-197 (GKSFTIECRV…FSCLAVLDLI (71 aa)). Cysteines 134 and 190 form a disulfide. Residues 224 to 248 (MVIIVTVVSVLLSLFVTSVLLCFIF) form a helical membrane-spanning segment. The Cytoplasmic portion of the chain corresponds to 249-275 (GQHLRQQRMGTYGVRAAWRRLPQAFRP). The required for interaction with EZR, MSN and RDX and co-localization to microvilli stretch occupies residues 251–275 (HLRQQRMGTYGVRAAWRRLPQAFRP).

The protein belongs to the immunoglobulin superfamily. ICAM family. As to quaternary structure, interacts with RDX, EZR and MSN.

Its subcellular location is the membrane. It is found in the cell projection. The protein localises to the microvillus. In terms of biological role, ICAM proteins are ligands for the leukocyte adhesion protein LFA-1 (integrin alpha-L/beta-2). ICAM2 may play a role in lymphocyte recirculation by blocking LFA-1-dependent cell adhesion. It mediates adhesive interactions important for antigen-specific immune response, NK-cell mediated clearance, lymphocyte recirculation, and other cellular interactions important for immune response and surveillance. This is Intercellular adhesion molecule 2 (ICAM2) from Gorilla gorilla gorilla (Western lowland gorilla).